The sequence spans 199 residues: Protein-methionine-sulfoxide reductase heme-binding subunit MsrQ (199 aa).

Transmembrane regions (helical) follow at residues 10–30 (WLKV…FWAI), 82–102 (LWCF…ELGI), 116–136 (PYLT…LTST), and 153–173 (VVYL…KILS).

Belongs to the MsrQ family. In terms of assembly, heterodimer of a catalytic subunit (MsrP) and a heme-binding subunit (MsrQ). FMN is required as a cofactor. The cofactor is heme b.

Its subcellular location is the cell inner membrane. Its function is as follows. Part of the MsrPQ system that repairs oxidized periplasmic proteins containing methionine sulfoxide residues (Met-O), using respiratory chain electrons. Thus protects these proteins from oxidative-stress damage caused by reactive species of oxygen and chlorine generated by the host defense mechanisms. MsrPQ is essential for the maintenance of envelope integrity under bleach stress, rescuing a wide series of structurally unrelated periplasmic proteins from methionine oxidation, including the primary periplasmic chaperone SurA and the lipoprotein Pal. MsrQ provides electrons for reduction to the reductase catalytic subunit MsrP, using the quinone pool of the respiratory chain. The chain is Protein-methionine-sulfoxide reductase heme-binding subunit MsrQ from Salmonella agona (strain SL483).